The following is a 129-amino-acid chain: MFARDLAECEKTERRVVSPDGNWESTRLLLKEDNMGFSFHITTIYEGKDFDMHYQNHLESVYCISGEGEVESRETGQKHHIKPGVVYVLDKHDAHTLRAFKELKLACVFNPPITGKEVHNSEGAYEILE.

It belongs to the ectoine synthase family.

It carries out the reaction (2S)-4-acetamido-2-aminobutanoate = L-ectoine + H2O. The protein operates within amine and polyamine biosynthesis; ectoine biosynthesis; L-ectoine from L-aspartate 4-semialdehyde: step 3/3. Its function is as follows. Catalyzes the circularization of gamma-N-acetyl-alpha,gamma-diaminobutyric acid (ADABA) to ectoine (1,4,5,6-tetrahydro-2-methyl-4-pyrimidine carboxylic acid), which is an excellent osmoprotectant. This is L-ectoine synthase from Marinomonas sp. (strain MWYL1).